The sequence spans 209 residues: MTQKEQGQGFIEVICGPMFAGKTESLIQRRNKALKLKKKILSFKPRIDDRYSVKEEIVSHNRNNIPAILIDKSKDILTFITPEINVVIIDESQFLDNDIIAIVDYLANCNIEVIISGLELDFCGKPFGPMPYLLAIADTVTKLTSICAISGGKANRTQRLIEGKPAQSNEPVVLVGGKEYHEPRCRKHHCLADIDKTKVNWKNFANQSK.

ATP contacts are provided by residues 16 to 23 (GPMFAGKT) and 90 to 93 (DESQ). Glu91 serves as the catalytic Proton acceptor.

It belongs to the thymidine kinase family. As to quaternary structure, homotetramer.

The protein localises to the cytoplasm. The catalysed reaction is thymidine + ATP = dTMP + ADP + H(+). This is Thymidine kinase from Aster yellows witches'-broom phytoplasma (strain AYWB).